A 240-amino-acid polypeptide reads, in one-letter code: B-cell receptor-associated protein 29 (240 aa).

The Lumenal segment spans residues 1 to 6; the sequence is MTLQWT. A helical transmembrane segment spans residues 7–27; it reads AVATFLYAEIGLILIFCLPFI. The Cytoplasmic portion of the chain corresponds to 28–43; that stretch reads PPQRWQKIFSFSVWGK. The helical transmembrane segment at 44 to 64 threads the bilayer; sequence IASFWNKAFLTIIILLIVLFL. At 65 to 103 the chain is on the lumenal side; sequence DAVREVRKYSSTHTIEKSSASRPAAYEHTQMKLFRSQRN. Residues 104–124 traverse the membrane as a helical segment; that stretch reads LYISGFSLFFWLVLRRLVTLI. Residues 125–240 lie on the Cytoplasmic side of the membrane; sequence TQLAKELSHK…DRAGKDKKCL (116 aa). A coiled-coil region spans residues 166-233; the sequence is GKEEEHILEA…REHSELQDRA (68 aa). The Di-lysine motif motif lies at 237-240; it reads KKCL.

Belongs to the BCAP29/BCAP31 family. Homodimer and heterodimer with BCAP31. Binds CASP8 as a complex containing BCAP31, BCAP29, BCL2 and/or BCL2L1. Interacts with VAMP3, VAMP1 and membrane IgD immunoglobulins. May interact with ACTG1 and non-muscle myosin II.

It is found in the endoplasmic reticulum membrane. In terms of biological role, may play a role in anterograde transport of membrane proteins from the endoplasmic reticulum to the Golgi. May be involved in CASP8-mediated apoptosis. This Bos taurus (Bovine) protein is B-cell receptor-associated protein 29 (BCAP29).